A 419-amino-acid polypeptide reads, in one-letter code: UDP-N-acetylglucosamine 1-carboxyvinyltransferase (419 aa).

A phosphoenolpyruvate-binding site is contributed by K22–N23. R93 lines the UDP-N-acetyl-alpha-D-glucosamine pocket. Residue C117 is the Proton donor of the active site. C117 carries the 2-(S-cysteinyl)pyruvic acid O-phosphothioketal modification. UDP-N-acetyl-alpha-D-glucosamine-binding positions include R122–L126, D308, and I330.

The protein belongs to the EPSP synthase family. MurA subfamily.

It localises to the cytoplasm. The enzyme catalyses phosphoenolpyruvate + UDP-N-acetyl-alpha-D-glucosamine = UDP-N-acetyl-3-O-(1-carboxyvinyl)-alpha-D-glucosamine + phosphate. Its pathway is cell wall biogenesis; peptidoglycan biosynthesis. Functionally, cell wall formation. Adds enolpyruvyl to UDP-N-acetylglucosamine. The chain is UDP-N-acetylglucosamine 1-carboxyvinyltransferase from Pseudomonas putida (Arthrobacter siderocapsulatus).